We begin with the raw amino-acid sequence, 84 residues long: MSGRVQKVMIPPINFIFKLLQQHTPVSIWLFEQTDIRLQGQIRGFDEFMNIVLDDAVQVDAKNNKRELGRILLKGDNITLIQAI.

One can recognise a Sm domain in the interval 13 to 84 (INFIFKLLQQ…GDNITLIQAI (72 aa)).

The protein belongs to the snRNP Sm proteins family. Component of the Sm core complex, present in spliceosomal snRNP U1, U2, U4/U6 and U5. The core complex contains smb1, smd1, smd2, smd3, sme1, smf1 and smg1 (Sm proteins B, D1, D2, D3, E, F and G, respectively), and is probably a heptameric ring structure.

The protein resides in the cytoplasm. It localises to the nucleus. Functionally, involved in pre-mRNA splicing. Binds and is required for the stability of snRNA U1, U2, U4 and U5 which contain a highly conserved structural motif called the Sm binding site. Involved in cap modification. In Schizosaccharomyces pombe (strain 972 / ATCC 24843) (Fission yeast), this protein is Small nuclear ribonucleoprotein E.